The chain runs to 85 residues: Small ribosomal subunit protein uS17 (85 aa).

Belongs to the universal ribosomal protein uS17 family. As to quaternary structure, part of the 30S ribosomal subunit.

One of the primary rRNA binding proteins, it binds specifically to the 5'-end of 16S ribosomal RNA. The protein is Small ribosomal subunit protein uS17 of Mycoplasmoides gallisepticum (strain R(low / passage 15 / clone 2)) (Mycoplasma gallisepticum).